The chain runs to 235 residues: Small ribosomal subunit protein uS10m (235 aa).

Residues 1-19 (MLRTSVRSPLLYRCLSKRF) constitute a mitochondrion transit peptide.

Belongs to the universal ribosomal protein uS10 family. Part of the mitochondrial small ribosomal subunit.

The protein resides in the mitochondrion. Involved in mitochondrial genome encoded proteins translation. Involved in the binding of tRNA to the ribosomes. This chain is Small ribosomal subunit protein uS10m (RSM10), found in Candida glabrata (strain ATCC 2001 / BCRC 20586 / JCM 3761 / NBRC 0622 / NRRL Y-65 / CBS 138) (Yeast).